The sequence spans 207 residues: Proteasome subunit beta (207 aa).

Positions 1-9 (MSNKNTFEG) are cleaved as a propeptide — removed in mature form; by autocatalysis. Thr10 serves as the catalytic Nucleophile.

It belongs to the peptidase T1B family. In terms of assembly, the 20S proteasome core is composed of 14 alpha and 14 beta subunits that assemble into four stacked heptameric rings, resulting in a barrel-shaped structure. The two inner rings, each composed of seven catalytic beta subunits, are sandwiched by two outer rings, each composed of seven alpha subunits. The catalytic chamber with the active sites is on the inside of the barrel. Has a gated structure, the ends of the cylinder being occluded by the N-termini of the alpha-subunits. Is capped at one or both ends by the proteasome regulatory ATPase, PAN.

Its subcellular location is the cytoplasm. The enzyme catalyses Cleavage of peptide bonds with very broad specificity.. With respect to regulation, the formation of the proteasomal ATPase PAN-20S proteasome complex, via the docking of the C-termini of PAN into the intersubunit pockets in the alpha-rings, triggers opening of the gate for substrate entry. Interconversion between the open-gate and close-gate conformations leads to a dynamic regulation of the 20S proteasome proteolysis activity. Its function is as follows. Component of the proteasome core, a large protease complex with broad specificity involved in protein degradation. The polypeptide is Proteasome subunit beta (Methanobrevibacter ruminantium (strain ATCC 35063 / DSM 1093 / JCM 13430 / OCM 146 / M1) (Methanobacterium ruminantium)).